A 1481-amino-acid polypeptide reads, in one-letter code: MQRSPLEKASVVSKLFFSWTRPILKKGYRQRLELSDIYHISSSDSADNLSEKLEREWDRELASKKNPKLINALRRCFFWRFMFYGIILYLGEVTKAVQPLLLGRIIASYDPDNKVERSIAIYLGIGLCLLFIVRTLLLHPAIFGLHHIGMQMRIAMFSLIYKKTLKLSSRVLDKISIGQLVSLLSNNLNKFDEGLALAHFVWIAPLQVTLLMGLLWDLLQAFTFCGLAFLVVLALLQAGLGKMMMKYRDQRAGKINERLVITSEMIENIQSVKAYCWEEAMEKIIENLRQTELKLTRKAAYVRYLNSSAFFFSGFFVVFLSVLPYALLKGIILRKIFTTISFCIVLRMAVTRQFPWAVQTWYDSLGAINKIQDFLQKQEYKTLEYNLTTTDVVMENVTAFWEEGFSKLFEKAKENNNNRKISNCDTSLFFSNLLLGTPVLKDISFKIERGQLLAVAGSTGAGKTSLLMMIMGELEPSEGKIKHSGRISFCSQYSWIMPGTIKDNIIFGVSYDEYRYRSVIKACQLEEDISKFSEKDNIVLGEGGITLSGGQRARISLARAVYKDADLYLLDSPFGYLDVLTEKEIFESCVCKLMANKTRILVTSKMEHLKKADKILILHEGSVYFYGTFSELQNQRPDFSSKLMGCDTFDQFTAERRNSIITETLRRFSLEGDTSVSWNETKKPSFKQTGEFGEKRKNSILNSINSIRKFSVVQKTSLQMNGIDGASDEPLERRLSLVPHSEPGEGILPRSNAVNSGPTFLGGRRQSVLNLMTCSSVNQGQSIHRKTATSTRKMSLAPQASLAEIDIYSRRLSQDTGLEISEEINEEDLRDCFFDDVENIPAVTTWNTYLRYITVHKSLMFVLIWCLVVFLVEVAASLVVLCLFPKILLQDKGNSTKNASNSYAVIITSTSSYYIFYIYVGVADTLLALGLFRGLPLVHTLITVSKTLHHKMLQSVLQAPMSTLNTLKTGGILNRFSKDIAVLDDLLPLTIFDFIQLLLIVIGAVVVVSVLQPYIFLATVPVIAAFILLRGYFLHTSQQLKQLESEGRSPIFTHLVTSLKGLWTLRAFGRQPYFETLFHKALNLHTANWFLYLSTLRWFQMRIEMIFVIFFIAVTFISILTTGEGEGRVGIILTLAMNIMGTLQWAVNSSIDVDSLMRSVSRVFKFIDMPTEDGKPNNSFRPSKDSQPSKVMIIENQHVKKDDIWPSGGQMTVKDLTAKYIDGGNAILENISFSISPGQRVGLLGRTGSGKSTLLLAFLRLLNTKGEIQIDGVSWDSITLQQWRKAFGVIPQKVFIFSGTFRKNLDPYEQWSDQEIWKVADEVGLRSVIEQFPGKLDFVLVDGGCVLSHGHKQLMCLARSVLSKAKILLLDEPSAHLDPITYQIIRRTLKQAFADCTVILSEHRIEAMLECQRFLVIEENKVRQYDSIQRMLSEKSLFRQAISPADRLKLLPHRNSSRQRSRANIAALKEETEEEVQETKL.

At 1 to 77 (MQRSPLEKAS…KLINALRRCF (77 aa)) the chain is on the cytoplasmic side. Residues 78–98 (FWRFMFYGIILYLGEVTKAVQ) form a helical membrane-spanning segment. One can recognise an ABC transmembrane type-1 1 domain in the interval 81–365 (FMFYGIILYL…WAVQTWYDSL (285 aa)). The Extracellular portion of the chain corresponds to 99 to 122 (PLLLGRIIASYDPDNKVERSIAIY). The chain crosses the membrane as a helical span at residues 123-146 (LGIGLCLLFIVRTLLLHPAIFGLH). Residues 147–195 (HIGMQMRIAMFSLIYKKTLKLSSRVLDKISIGQLVSLLSNNLNKFDEGL) lie on the Cytoplasmic side of the membrane. A helical transmembrane segment spans residues 196 to 216 (ALAHFVWIAPLQVTLLMGLLW). The Extracellular portion of the chain corresponds to 217 to 222 (DLLQAF). The helical transmembrane segment at 223-243 (TFCGLAFLVVLALLQAGLGKM) threads the bilayer. The Cytoplasmic segment spans residues 244-298 (MMKYRDQRAGKINERLVITSEMIENIQSVKAYCWEEAMEKIIENLRQTELKLTRK). Residues 299–319 (AAYVRYLNSSAFFFSGFFVVF) traverse the membrane as a helical segment. Residues 320 to 339 (LSVLPYALLKGIILRKIFTT) are Extracellular-facing. A helical transmembrane segment spans residues 340–358 (ISFCIVLRMAVTRQFPWAV). Over 359-858 (QTWYDSLGAI…YLRYITVHKS (500 aa)) the chain is Cytoplasmic. ATP contacts are provided by residues Trp-401, 457-464 (GSTGAGKT), and Gln-492. The region spanning 421 to 645 (ISNCDTSLFF…RPDFSSKLMG (225 aa)) is the ABC transporter 1 domain. Cys-523 carries the S-palmitoyl cysteine lipid modification. 2 positions are modified to phosphoserine: Ser-548 and Ser-659. The segment at 653 to 831 (TAERRNSIIT…EEINEEDLRD (179 aa)) is disordered R region. Ser-669 carries the phosphoserine; by PKA modification. The residue at position 685 (Ser-685) is a Phosphoserine. Residue Lys-687 forms a Glycyl lysine isopeptide (Lys-Gly) (interchain with G-Cter in ubiquitin) linkage. Phosphoserine is present on residues Ser-699 and Ser-711. Residue Thr-716 is modified to Phosphothreonine. Phosphoserine is present on residues Ser-736, Ser-767, Ser-790, Ser-795, and Ser-813. A helical membrane pass occupies residues 859-879 (LMFVLIWCLVVFLVEVAASLV). One can recognise an ABC transmembrane type-1 2 domain in the interval 859–1155 (LMFVLIWCLV…AVNSSIDVDS (297 aa)). The Extracellular segment spans residues 880–918 (VLCLFPKILLQDKGNSTKNASNSYAVIITSTSSYYIFYI). Asn-894 and Asn-898 each carry an N-linked (GlcNAc...) asparagine glycan. Residues 919–939 (YVGVADTLLALGLFRGLPLVH) traverse the membrane as a discontinuously helical segment. Topologically, residues 940-990 (TLITVSKTLHHKMLQSVLQAPMSTLNTLKTGGILNRFSKDIAVLDDLLPLT) are cytoplasmic. Residues 991–1011 (IFDFIQLLLIVIGAVVVVSVL) form a helical membrane-spanning segment. The Extracellular portion of the chain corresponds to 1012–1013 (QP). The chain crosses the membrane as a helical span at residues 1014 to 1034 (YIFLATVPVIAAFILLRGYFL). At 1035 to 1095 (HTSQQLKQLE…TANWFLYLST (61 aa)) the chain is on the cytoplasmic side. A helical transmembrane segment spans residues 1096-1116 (LRWFQMRIEMIFVIFFIAVTF). The Extracellular portion of the chain corresponds to 1117–1130 (ISILTTGEGEGRVG). Residues 1131–1151 (IILTLAMNIMGTLQWAVNSSI) form a helical membrane-spanning segment. Residues 1152-1481 (DVDSLMRSVS…TEEEVQETKL (330 aa)) lie on the Cytoplasmic side of the membrane. Positions 1211–1444 (MTVKDLTAKY…KSLFRQAISP (234 aa)) constitute an ABC transporter 2 domain. Residues Tyr-1220 and 1245–1252 (GRTGSGKS) each bind ATP. Residues 1387–1481 (RTLKQAFADC…TEEEVQETKL (95 aa)) form an interaction with GORASP2 region. Cys-1396 carries the S-palmitoyl cysteine lipid modification. Ser-1457 carries the post-translational modification Phosphoserine. The PDZ-binding signature appears at 1479–1481 (TKL).

It belongs to the ABC transporter superfamily. ABCC family. CFTR transporter (TC 3.A.1.202) subfamily. As to quaternary structure, monomer; does not require oligomerization for channel activity. May form oligomers in the membrane. Interacts with SLC26A3, SLC26A6 and NHERF1. Interacts with SHANK2. Interacts with MYO6. Interacts (via C-terminus) with GOPC (via PDZ domain); this promotes CFTR internalization and thereby decreases channel activity. Interacts with SLC4A7 through NHERF1. Found in a complex with MYO5B and RAB11A. Interacts with ANO1. Interacts with SLC26A8. Interacts with AHCYL1; the interaction increases CFTR activity. Interacts with CSE1L. The core-glycosylated form interacts with GORASP2 (via PDZ GRASP-type 1 domain) in respone to ER stress. Interacts with MARCHF2; the interaction leads to CFTR ubiqtuitination and degradation. Interacts with ADGRG2. In terms of processing, N-glycosylated. Post-translationally, phosphorylated; cAMP treatment promotes phosphorylation and activates the channel. Dephosphorylation decreases the ATPase activity (in vitro). Phosphorylation at PKA sites activates the channel. Phosphorylation at PKC sites enhances the response to phosphorylation by PKA. Phosphorylated by AMPK; this inhibits channel activity. Ubiquitinated, leading to its degradation in the lysosome. Deubiquitination by USP10 in early endosomes enhances its endocytic recycling to the cell membrane. Ubiquitinated by RNF185 during ER stress. Ubiquitinated by MARCHF2.

It is found in the apical cell membrane. The protein resides in the early endosome membrane. The protein localises to the cell membrane. Its subcellular location is the recycling endosome membrane. It localises to the endoplasmic reticulum membrane. It is found in the nucleus. It carries out the reaction ATP + H2O + closed Cl(-) channel = ADP + phosphate + open Cl(-) channel.. It catalyses the reaction chloride(in) = chloride(out). The enzyme catalyses hydrogencarbonate(in) = hydrogencarbonate(out). The catalysed reaction is ATP + H2O = ADP + phosphate + H(+). Epithelial ion channel that plays an important role in the regulation of epithelial ion and water transport and fluid homeostasis. Mediates the transport of chloride ions across the cell membrane. Possesses an intrinsic ATPase activity and utilizes ATP to gate its channel; the passive flow of anions through the channel is gated by cycles of ATP binding and hydrolysis by the ATP-binding domains. The ion channel is also permeable to HCO(3)(-); selectivity depends on the extracellular chloride concentration. Exerts its function also by modulating the activity of other ion channels and transporters. Contributes to the regulation of the pH and the ion content of the epithelial fluid layer. Modulates the activity of the epithelial sodium channel (ENaC) complex, in part by regulating the cell surface expression of the ENaC complex. May regulate bicarbonate secretion and salvage in epithelial cells by regulating the transporter SLC4A7. Can inhibit the chloride channel activity of ANO1. Plays a role in the chloride and bicarbonate homeostasis during sperm epididymal maturation and capacitation. The sequence is that of Cystic fibrosis transmembrane conductance regulator from Ovis aries (Sheep).